A 1410-amino-acid chain; its full sequence is Slit homolog 1 protein (1410 aa).

Positions 1–16 (MLICFIFILLIPESAT) are cleaved as a signal peptide. In terms of domain architecture, LRRNT 1 spans 17-43 (CPAECVCVDRTVSCVGQQLTEVPQNIP). LRR repeat units follow at residues 22-42 (VCVDRTVSCVGQQLTEVPQNI), 43-66 (PNDTIRLDLQDNEITKIGPNDFSS), 67-90 (LMNLKALQLMDNQIVTIHNQSFSS), 91-114 (LVFLQKLRLSRNRIRHLPDNVFQN), 116-138 (LKLTHLDLSENDITVVSDAQLQG), 140-162 (EFLEVLNLDKNHIFCLENNVISS), 163-186 (WVSLEVLTLNGNRLTTFEEPSNAR), 219-242 (TVCATPLNLQGSSIEILQDKFMTC), 286-309 (PPSTTEIRLEQNQISSIPSHSFKN), 310-333 (LKNLTRLDLSKNIITEIQPKAFLG), 335-357 (HNLHTLVLYGNNITDLKSDTFEG), 358-381 (LGSLQLLLLNANQLTCIRRGTFDH), 383-405 (PKLSMLSLYDNDIKSISEVTFQN), 407-430 (TSLSTLHLAKNPLICDCNLQWLAQ), 442-465 (ARCEQPKRLRKKKFATLPPNKFKC), 489-510 (CDCYGTTVDCNKRGLNTIPTSI), 511-535 (PRFATQLLLSGNNISTVDLNSNIHV), 536-559 (LENLEVLDLSNNHITFINDKSFEK), 561-583 (SKLRELRLNDNKLHHFSSMVLDE), and 585-607 (SNLEILDLSGNNIQCFSSIFFNK). The LRRCT 1 domain maps to 195–243 (NPWNCDCRLRWMRKWLEKAEGQNKTVCATPLNLQGSSIEILQDKFMTCS). The LRRNT 2 domain maps to 259 to 286 (ICPLPCTCTGTTVDCRDSGLTYVPTNLP). The region spanning 417–466 (NPLICDCNLQWLAQINLQKNIETSGARCEQPKRLRKKKFATLPPNKFKCK) is the LRRCT 2 domain. The 28-residue stretch at 484-511 (ICPTQCDCYGTTVDCNKRGLNTIPTSIP) folds into the LRRNT 3 domain. Positions 619–671 (NDLLCDCRILPLMSWLRSNSSHSIDIPPCQQFQYSDNESDKQRCAAFPEETCS) constitute an LRRCT 3 domain. Residues 677–703 (CPPKCSCLDRVVRCSNKNLTSFPSRIP) enclose the LRRNT 4 domain. LRR repeat units lie at residues 681–703 (CSCLDRVVRCSNKNLTSFPSRIP), 704–726 (FDTTELYLDANYINEIPAHDLNR), 727–750 (LYSLTKLDLSHNRLISLENNTFSN), 752–774 (TRLSTLIISYNKLRCLQPLAFNG), 775–798 (LNALRILSLHGNDISFLPQSAFSN), and 800–823 (TSITHIAVGSNSLYCDCNMAWFSK). An LRRCT 4 domain is found at 810-859 (NSLYCDCNMAWFSKWIKSKFIEAGIARCEYPNTVSNQLLLTAQPYQFTCD). EGF-like domains are found at residues 871 to 906 (DLCLNSPCKNNAICETTSSRKYTCNCTPGFYGVHCE) and 908 to 945 (QIDACYGSPCLNNATCKVAQAGRFNCYCNKGFEGDYCE). Disulfide bonds link Cys873-Cys884, Cys878-Cys894, Cys896-Cys905, Cys912-Cys923, Cys917-Cys933, Cys935-Cys944, Cys951-Cys962, Cys956-Cys971, Cys973-Cys982, Cys989-Cys1002, Cys996-Cys1011, Cys1013-Cys1022, Cys1029-Cys1040, Cys1034-Cys1049, Cys1051-Cys1060, Cys1076-Cys1086, Cys1081-Cys1097, and Cys1099-Cys1108. The EGF-like 1; calcium-binding domain maps to 947–983 (NIDDCVNSKCENGGKCVDLINSYRCDCPMEYEGKHCE). The region spanning 985–1023 (KLEYCTKKLNPCENNGKCIPINGSYSCMCSPGFTGNNCE) is the EGF-like 3 domain. An EGF-like 2; calcium-binding domain is found at 1025–1061 (NIDDCKNVECQNGGSCVDGILSYDCLCRPGYAGQYCE). Residues 1072–1109 (KTDACQQSACGQGECVASQNSSDFTCKCHEGFSGPSCD) enclose the EGF-like 4 domain. The Laminin G-like domain maps to 1112 to 1285 (MSVGFKNPGA…LENVNTEQSC (174 aa)). Residues 1197-1221 (TSERKCFLQIDKNPVQIVENSGKSD) form an LRR 27 repeat. 8 disulfides stabilise this stretch: Cys1259/Cys1285, Cys1292/Cys1302, Cys1297/Cys1314, Cys1316/Cys1325, Cys1332/Cys1368, Cys1346/Cys1382, Cys1357/Cys1398, and Cys1361/Cys1400. Positions 1288–1326 (TVNFCAGIDCGNGKCTNNALSPKGYMCQCDSHFSGEHCD) constitute an EGF-like 5 domain. Residues 1332 to 1406 (CDKQKFRRHH…QCQCEPTKSV (75 aa)) form the CTCK domain.

As to quaternary structure, interacts with eva-1.

Its subcellular location is the secreted. Its function is as follows. Functions as a ligand for sax-3 receptor during larval development. Acts via the sax-3/Robo receptor to direct ventral axon guidance and guidance at the midline during embryonic development. In Caenorhabditis elegans, this protein is Slit homolog 1 protein (slt-1).